A 186-amino-acid polypeptide reads, in one-letter code: Ferritin heavy chain (186 aa).

A Ferritin-like diiron domain is found at 16–165; that stretch reads QNYHQDSEAA…DHVTNLRKMG (150 aa). Fe cation contacts are provided by Glu33, Glu68, His71, Glu113, and Gln147. Ser184 is modified (phosphoserine).

The protein belongs to the ferritin family. In terms of assembly, oligomer of 24 subunits. There are two types of subunits: L (light) chain and H (heavy) chain. The major chain can be light or heavy, depending on the species and tissue type. The functional molecule forms a roughly spherical shell with a diameter of 12 nm and contains a central cavity into which the insoluble mineral iron core is deposited. Interacts with NCOA4; NCOA4 promotes targeting of the iron-binding ferritin complex to autolysosomes following starvation or iron depletion.

It localises to the cytoplasm. The protein resides in the lysosome. It is found in the cytoplasmic vesicle. The protein localises to the autophagosome. It carries out the reaction 4 Fe(2+) + O2 + 4 H(+) = 4 Fe(3+) + 2 H2O. Stores iron in a soluble, non-toxic, readily available form. Important for iron homeostasis. Has ferroxidase activity. Iron is taken up in the ferrous form and deposited as ferric hydroxides after oxidation. Also plays a role in delivery of iron to cells. Mediates iron uptake in capsule cells of the developing kidney. Delivery to lysosomes is mediated by the cargo receptor NCOA4 for autophagic degradation and release of iron. The sequence is that of Ferritin heavy chain (FTH1) from Cricetulus griseus (Chinese hamster).